The chain runs to 199 residues: Transgelin-2 (199 aa).

At Ala-2 the chain carries N-acetylalanine. Ser-11 bears the Phosphoserine mark. An N6-acetyllysine mark is found at Lys-17 and Lys-20. Residues 24-136 form the Calponin-homology (CH) domain; it reads PDLEQILIQW…RTLMNLGGLA (113 aa). Ser-163 carries the post-translational modification Phosphoserine. Lys-171 participates in a covalent cross-link: Glycyl lysine isopeptide (Lys-Gly) (interchain with G-Cter in SUMO2). One copy of the Calponin-like repeat lies at 174-199; it reads IGLQMGTNRGASQAGMTGYGMPRQIL. Thr-180 bears the Phosphothreonine mark. Omega-N-methylarginine occurs at positions 182 and 196.

The protein belongs to the calponin family.

The sequence is that of Transgelin-2 (Tagln2) from Rattus norvegicus (Rat).